Here is a 127-residue protein sequence, read N- to C-terminus: Small ribosomal subunit protein uS13 (127 aa).

The tract at residues 95 to 127 is disordered; it reads GLPLRGQRTKTNARTRRGKKGAAIGGKKKATKK.

The protein belongs to the universal ribosomal protein uS13 family. In terms of assembly, part of the 30S ribosomal subunit. Forms a loose heterodimer with protein S19. Forms two bridges to the 50S subunit in the 70S ribosome.

Functionally, located at the top of the head of the 30S subunit, it contacts several helices of the 16S rRNA. In the 70S ribosome it contacts the 23S rRNA (bridge B1a) and protein L5 of the 50S subunit (bridge B1b), connecting the 2 subunits; these bridges are implicated in subunit movement. Contacts the tRNAs in the A and P-sites. This Herpetosiphon aurantiacus (strain ATCC 23779 / DSM 785 / 114-95) protein is Small ribosomal subunit protein uS13.